The chain runs to 812 residues: E3 UFM1-protein ligase 1 homolog (812 aa).

Positions 389-495 (IKHSAGQGKP…KTKEDNTNIF (107 aa)) are disordered. Composition is skewed to basic and acidic residues over residues 403–415 (SEHR…KDLG) and 475–491 (DAKH…KEDN).

The protein belongs to the UFL1 family.

Its function is as follows. E3 UFM1-protein ligase that mediates ufmylation of target proteins. This is E3 UFM1-protein ligase 1 homolog from Oryza sativa subsp. indica (Rice).